We begin with the raw amino-acid sequence, 233 residues long: NAD(P)H-hydrate epimerase (233 aa).

The 208-residue stretch at 10–217 (AINVDLELFN…ALQRKYELNL (208 aa)) folds into the YjeF N-terminal domain. 60 to 64 (NNGGD) contacts (6S)-NADPHX. The K(+) site is built by N61 and D125. (6S)-NADPHX is bound by residues 129–135 (GFSFKPP) and D158. Position 161 (S161) interacts with K(+).

Belongs to the NnrE/AIBP family. K(+) is required as a cofactor.

It carries out the reaction (6R)-NADHX = (6S)-NADHX. The enzyme catalyses (6R)-NADPHX = (6S)-NADPHX. Its function is as follows. Catalyzes the epimerization of the S- and R-forms of NAD(P)HX, a damaged form of NAD(P)H that is a result of enzymatic or heat-dependent hydration. This is a prerequisite for the S-specific NAD(P)H-hydrate dehydratase to allow the repair of both epimers of NAD(P)HX. The sequence is that of NAD(P)H-hydrate epimerase from Drosophila grimshawi (Hawaiian fruit fly).